The chain runs to 75 residues: DNA-directed RNA polymerase subunit Rpo5 (75 aa).

The protein belongs to the archaeal Rpo5/eukaryotic RPB5 RNA polymerase subunit family. Part of the RNA polymerase complex.

It is found in the cytoplasm. It catalyses the reaction RNA(n) + a ribonucleoside 5'-triphosphate = RNA(n+1) + diphosphate. In terms of biological role, DNA-dependent RNA polymerase (RNAP) catalyzes the transcription of DNA into RNA using the four ribonucleoside triphosphates as substrates. This chain is DNA-directed RNA polymerase subunit Rpo5, found in Halobacterium salinarum (strain ATCC 700922 / JCM 11081 / NRC-1) (Halobacterium halobium).